A 148-amino-acid chain; its full sequence is LTEEQKQDIREAFDLFDTDGSGTIDAKELKVAMRALGFEPKKEEIKKMIADIDKDGSGTIDFEEFLQMMTAKMGERDSREEIMKAFRLFDDDETGKISFKNLKRVAKELGENMTDEELQEMIDEADRDGDGEVNEEEFFRIMKKTSLF.

4 consecutive EF-hand domains span residues 4–39 (EQKQDIREAFDLFDTDGSGTIDAKELKVAMRALGFE), 40–75 (PKKEEIKKMIADIDKDGSGTIDFEEFLQMMTAKMGE), 77–112 (DSREEIMKAFRLFDDDETGKISFKNLKRVAKELGEN), and 113–148 (MTDEELQEMIDEADRDGDGEVNEEEFFRIMKKTSLF). Ca(2+)-binding residues include aspartate 17, aspartate 19, serine 21, threonine 23, glutamate 28, aspartate 53, aspartate 55, serine 57, threonine 59, and glutamate 64. Residues aspartate 126, aspartate 128, aspartate 130, glutamate 132, and glutamate 137 each contribute to the Ca(2+) site.

It belongs to the centrin family. As to expression, ubiquitous.

Functionally, this calcium-binding protein is found in the basal body complexes (the functional homolog of the centrosome in animal cell). In mitotic cells it is specifically associated with the poles of the mitotic spindles at the sites of the duplicated basal body complexes. The polypeptide is Caltractin (Tetraselmis striata (Green microalga)).